The sequence spans 290 residues: uncharacterized protein (290 aa).

The protein belongs to the glycosyltransferase 2 family.

This is an uncharacterized protein from Methanocaldococcus jannaschii (strain ATCC 43067 / DSM 2661 / JAL-1 / JCM 10045 / NBRC 100440) (Methanococcus jannaschii).